We begin with the raw amino-acid sequence, 457 residues long: Peptidyl-prolyl cis-trans isomerase FKBP5 (457 aa).

At Met-1 the chain carries N-acetylmethionine. The interval 1-26 (MTTDEGAKNNGESPTATVAEQGEDIT) is disordered. Ser-13 bears the Phosphoserine mark. PPIase FKBP-type domains follow at residues 50-138 (GDKV…LDFK) and 165-251 (GATV…KSFE). TPR repeat units lie at residues 268–301 (AAIV…LEME), 317–350 (LAAF…DSAN), and 351–384 (GKGL…NPQN). The segment at 420-457 (DAKEEANKAMGKKTSEGVTNEKGTDSQAMEEEKPEGHV) is disordered. The residue at position 445 (Ser-445) is a Phosphoserine.

In terms of assembly, part of a heteromultimeric cytoplasmic complex with HSP90AA1, HSPA1A/HSPA1B and steroid receptors. Upon ligand binding dissociates from the complex and FKBP4 takes its place. Interacts with functionally mature heterooligomeric progesterone receptor complexes along with HSP90 and TEBP. Interacts with IFI44L; this interaction modulates the kinase activity of IKBKB and IKBKE. Interacts with IKBKB and IKBKE.

It is found in the cytoplasm. The protein resides in the nucleus. It carries out the reaction [protein]-peptidylproline (omega=180) = [protein]-peptidylproline (omega=0). With respect to regulation, inhibited by FK506 but not cyclosporin. Its function is as follows. Immunophilin protein with PPIase and co-chaperone activities. Component of unligated steroid receptors heterocomplexes through interaction with heat-shock protein 90 (HSP90). Plays a role in the intracellular trafficking of heterooligomeric forms of steroid hormone receptors maintaining the complex into the cytoplasm when unliganded. Acts as a regulator of Akt/AKT1 activity by promoting the interaction between Akt/AKT1 and PHLPP1, thereby enhancing dephosphorylation and subsequent activation of Akt/AKT1. Interacts with IKBKE and IKBKB which facilitates IKK complex assembly leading to increased IKBKE and IKBKB kinase activity, NF-kappaB activation, and IFN production. The chain is Peptidyl-prolyl cis-trans isomerase FKBP5 (FKBP5) from Pongo abelii (Sumatran orangutan).